The chain runs to 312 residues: Pyridoxal kinase (312 aa).

Met-1 is modified (N-acetylmethionine). Ser-12 and Thr-47 together coordinate pyridoxal 5'-phosphate. Pyridoxamine contacts are provided by Ser-12 and Thr-47. At Ser-59 the chain carries Phosphoserine. Asp-113 is a binding site for K(+). Tyr-127 serves as a coordination point for pyridoxal 5'-phosphate. Thr-148 serves as a coordination point for K(+). Asn-150 provides a ligand contact to ADP. Residue Asn-150 coordinates ATP. A Phosphoserine modification is found at Ser-164. Thr-186 contacts K(+). 186-187 (TS) provides a ligand contact to ADP. An ATP-binding site is contributed by 186–187 (TS). Ser-213 carries the phosphoserine modification. ADP-binding positions include 223 to 226 (MHKV) and 233 to 234 (TG). ATP-binding positions include 223–226 (MHKV) and 233–234 (TG). 232–235 (GTGD) contacts pyridoxal 5'-phosphate. A pyridoxamine-binding site is contributed by Asp-235. Asp-235 serves as the catalytic Proton acceptor. The residue at position 285 (Ser-285) is a Phosphoserine.

The protein belongs to the pyridoxine kinase family. In terms of assembly, homodimer. Zn(2+) serves as cofactor. The cofactor is Mg(2+). In terms of tissue distribution, ubiquitous.

The protein resides in the cytoplasm. Its subcellular location is the cytosol. It carries out the reaction pyridoxal + ATP = pyridoxal 5'-phosphate + ADP + H(+). The enzyme catalyses pyridoxamine + ATP = pyridoxamine 5'-phosphate + ADP + H(+). The catalysed reaction is pyridoxine + ATP = pyridoxine 5'-phosphate + ADP + H(+). The protein operates within cofactor metabolism; pyridoxal 5'-phosphate salvage; pyridoxal 5'-phosphate from pyridoxal: step 1/1. It participates in cofactor metabolism; pyridoxal 5'-phosphate salvage; pyridoxine 5'-phosphate from pyridoxine: step 1/1. Its pathway is cofactor metabolism; pyridoxal 5'-phosphate salvage; pyridoxamine 5'-phosphate from pyridoxamine: step 1/1. With respect to regulation, activated by K(+). Activity is increased in the presence of Na(+). Functionally, catalyzes the phosphorylation of the dietary vitamin B6 vitamers pyridoxal (PL), pyridoxine (PN) and pyridoxamine (PM) to form pyridoxal 5'-phosphate (PLP), pyridoxine 5'-phosphate (PNP) and pyridoxamine 5'-phosphate (PMP), respectively. PLP is the active form of vitamin B6, and acts as a cofactor for over 140 different enzymatic reactions. This Ovis aries (Sheep) protein is Pyridoxal kinase (PDXK).